Consider the following 562-residue polypeptide: Protoporphyrinogen oxidase 1, chloroplastic (562 aa).

The transit peptide at 1 to 48 (MSAMALSSTMALSLPQSSMSLSHCRHNRITILIPSSSLRRRGGSSIRC) directs the protein to the chloroplast. FAD-binding positions include 88-93 (GGGISG), 115-116 (EA), and 137-140 (GPNS). The interval 274–302 (TLKTIQERKDNPKPPRDPRLPKPKGQTVG) is disordered. Basic and acidic residues predominate over residues 278–293 (IQERKDNPKPPRDPRL). Residues valine 323 and 536–538 (VAL) each bind FAD.

Belongs to the protoporphyrinogen/coproporphyrinogen oxidase family. Protoporphyrinogen oxidase subfamily. Requires FAD as cofactor.

The protein resides in the plastid. Its subcellular location is the chloroplast thylakoid membrane. It is found in the chloroplast inner membrane. It catalyses the reaction protoporphyrinogen IX + 3 O2 = protoporphyrin IX + 3 H2O2. Its pathway is porphyrin-containing compound metabolism; protoporphyrin-IX biosynthesis; protoporphyrin-IX from protoporphyrinogen-IX: step 1/1. It functions in the pathway porphyrin-containing compound metabolism; chlorophyll biosynthesis. In terms of biological role, catalyzes the 6-electron oxidation of protoporphyrinogen-IX to form protoporphyrin-IX. The sequence is that of Protoporphyrinogen oxidase 1, chloroplastic from Spinacia oleracea (Spinach).